We begin with the raw amino-acid sequence, 229 residues long: Cytochrome c oxidase subunit 2 (229 aa).

At 1 to 14 (MAQQAQLGLQDAAS) the chain is on the mitochondrial intermembrane side. The chain crosses the membrane as a helical span at residues 15–45 (PIMEELIHFHDHTLTVVFLISVLIFYLIIVM). The Mitochondrial matrix portion of the chain corresponds to 46–59 (VTTTFMNKHSLDSQ). Residues 60-87 (EVEIVWTVMPAIVLITIALPSLRILYLT) form a helical membrane-spanning segment. Topologically, residues 88-229 (DEISNPHLTI…ENWTTKVLAS (142 aa)) are mitochondrial intermembrane. His-161, Cys-196, Glu-198, Cys-200, His-204, and Met-207 together coordinate Cu cation. Glu-198 serves as a coordination point for Mg(2+).

The protein belongs to the cytochrome c oxidase subunit 2 family. Component of the cytochrome c oxidase (complex IV, CIV), a multisubunit enzyme composed of 14 subunits. The complex is composed of a catalytic core of 3 subunits MT-CO1, MT-CO2 and MT-CO3, encoded in the mitochondrial DNA, and 11 supernumerary subunits COX4I, COX5A, COX5B, COX6A, COX6B, COX6C, COX7A, COX7B, COX7C, COX8 and NDUFA4, which are encoded in the nuclear genome. The complex exists as a monomer or a dimer and forms supercomplexes (SCs) in the inner mitochondrial membrane with NADH-ubiquinone oxidoreductase (complex I, CI) and ubiquinol-cytochrome c oxidoreductase (cytochrome b-c1 complex, complex III, CIII), resulting in different assemblies (supercomplex SCI(1)III(2)IV(1) and megacomplex MCI(2)III(2)IV(2)). Found in a complex with TMEM177, COA6, COX18, COX20, SCO1 and SCO2. Interacts with TMEM177 in a COX20-dependent manner. Interacts with COX20. Interacts with COX16. The cofactor is Cu cation.

It is found in the mitochondrion inner membrane. It carries out the reaction 4 Fe(II)-[cytochrome c] + O2 + 8 H(+)(in) = 4 Fe(III)-[cytochrome c] + 2 H2O + 4 H(+)(out). In terms of biological role, component of the cytochrome c oxidase, the last enzyme in the mitochondrial electron transport chain which drives oxidative phosphorylation. The respiratory chain contains 3 multisubunit complexes succinate dehydrogenase (complex II, CII), ubiquinol-cytochrome c oxidoreductase (cytochrome b-c1 complex, complex III, CIII) and cytochrome c oxidase (complex IV, CIV), that cooperate to transfer electrons derived from NADH and succinate to molecular oxygen, creating an electrochemical gradient over the inner membrane that drives transmembrane transport and the ATP synthase. Cytochrome c oxidase is the component of the respiratory chain that catalyzes the reduction of oxygen to water. Electrons originating from reduced cytochrome c in the intermembrane space (IMS) are transferred via the dinuclear copper A center (CU(A)) of subunit 2 and heme A of subunit 1 to the active site in subunit 1, a binuclear center (BNC) formed by heme A3 and copper B (CU(B)). The BNC reduces molecular oxygen to 2 water molecules using 4 electrons from cytochrome c in the IMS and 4 protons from the mitochondrial matrix. This is Cytochrome c oxidase subunit 2 (MT-CO2) from Petromyzon marinus (Sea lamprey).